The following is a 528-amino-acid chain: UDP-glucuronosyltransferase 2B30 (528 aa).

Residues 1 to 23 (MSMKWTSALLLIQLSCYLSSGNC) form the signal peptide. Lys135 is subject to N6-succinyllysine. Asn315 carries N-linked (GlcNAc...) asparagine glycosylation. A helical membrane pass occupies residues 493–513 (VIGFLLACVATVIFIITKCLF).

It belongs to the UDP-glycosyltransferase family. In terms of tissue distribution, expressed in several tissues, including prostate, testis, mammary gland, kidney, adrenals and intestine.

The protein resides in the microsome membrane. The protein localises to the endoplasmic reticulum membrane. The catalysed reaction is glucuronate acceptor + UDP-alpha-D-glucuronate = acceptor beta-D-glucuronoside + UDP + H(+). UDPGTs are of major importance in the conjugation and subsequent elimination of potentially toxic xenobiotics and endogenous compounds. This isozyme has glucuronidating capacity on testosterone, dihydrotestosterone, 5-alpha-androstane-3-alpha,17-beta-diol, androsterone, oestradiol, tetrahydroaldosterone and tetrahydrocortisone. This enzyme is essential to inactivation of several steroids. This Macaca fascicularis (Crab-eating macaque) protein is UDP-glucuronosyltransferase 2B30 (UGT2B30).